The sequence spans 313 residues: Olfactory receptor 4E2 (313 aa).

Topologically, residues 1–25 (MDSLNQTRVTEFVFLGLTDNRVLEM) are extracellular. The N-linked (GlcNAc...) asparagine glycan is linked to Asn-5. The helical transmembrane segment at 26-49 (LFFMAFSAIYMLTLSGNILIIIAT) threads the bilayer. Residues 50–57 (VFTPSLHT) are Cytoplasmic-facing. Residues 58-79 (PMYFFLSNLSFIDICHSSVTVP) form a helical membrane-spanning segment. The Extracellular segment spans residues 80 to 100 (KMLEGLLLERKTISFDNCITQ). Cys-97 and Cys-179 are joined by a disulfide. Residues 101 to 120 (LFFLHLFACAEIFLLIIVAY) traverse the membrane as a helical segment. Residues His-105 and Cys-109 each contribute to the Cu cation site. At 121-139 (DRYVAICTPLHYPNVMNMR) the chain is on the cytoplasmic side. Residues 140 to 158 (VCIQLVFALWLGGTVHSLG) traverse the membrane as a helical segment. Residues 159-195 (QTFLTIRLPYCGPNIIDSYFCDVPLVIKLACTDTYLT) lie on the Extracellular side of the membrane. Residues 196–219 (GILIVTNSGTISLSCFLAVVTSYM) form a helical membrane-spanning segment. Residues 220-235 (VILVSLRKHSAEGRQK) lie on the Cytoplasmic side of the membrane. A helical membrane pass occupies residues 236 to 258 (ALSTCSAHFMVVALFFGPCIFIY). Residues 259 to 269 (TRPDTSFSIDK) lie on the Extracellular side of the membrane. Arg-260 contributes to the Cu cation binding site. The chain crosses the membrane as a helical span at residues 270 to 289 (VVSVFYTVVTPLLNPFIYTL). Residues 290-313 (RNEEVKSAMKQLRQRQVFFTKSYT) are Cytoplasmic-facing.

This sequence belongs to the G-protein coupled receptor 1 family.

The protein resides in the cell membrane. Its activity is regulated as follows. Copper binding enhances receptor activity in response to odorant binding. In terms of biological role, olfactory receptor that is activated by the binding of organosulfur odorants with thioether groups such as (methylthio)methanethiol (MTMT) and bis(methylthiomethyl) disulfide. Also binds odorants cis-cyclooctene and tert-butyl mercaptan. The activity of this receptor is mediated by G proteins which activate adenylyl cyclase. This chain is Olfactory receptor 4E2, found in Homo sapiens (Human).